A 587-amino-acid polypeptide reads, in one-letter code: Folylpolyglutamate synthase, mitochondrial (587 aa).

A mitochondrion-targeting transit peptide spans 1 to 42; sequence MSRARSHLRAALFLAAASARGITTQVAARRGLSAWPVPQEPS. Methionine 43 bears the N-acetylmethionine mark. Residue 106-109 coordinates ATP; it reads GKGS. Residues serine 130, glutamate 200, and histidine 228 each contribute to the Mg(2+) site. The ATP site is built by arginine 363 and aspartate 377. A Phosphoserine modification is found at serine 539.

The protein belongs to the folylpolyglutamate synthase family. Monomer. The cofactor is K(+). It depends on NH4(+) as a cofactor.

Its subcellular location is the mitochondrion inner membrane. It is found in the mitochondrion matrix. It localises to the cytoplasm. The enzyme catalyses (6S)-5,6,7,8-tetrahydrofolyl-(gamma-L-Glu)(n) + L-glutamate + ATP = (6S)-5,6,7,8-tetrahydrofolyl-(gamma-L-Glu)(n+1) + ADP + phosphate + H(+). It participates in cofactor biosynthesis; tetrahydrofolylpolyglutamate biosynthesis. With respect to regulation, activated by 10 mM sodium bicarbonate. In terms of biological role, catalyzes conversion of folates to polyglutamate derivatives allowing concentration of folate compounds in the cell and the intracellular retention of these cofactors, which are important substrates for most of the folate-dependent enzymes that are involved in one-carbon transfer reactions involved in purine, pyrimidine and amino acid synthesis. Unsubstituted reduced folates are the preferred substrates. Metabolizes methotrexate (MTX) to polyglutamates. This is Folylpolyglutamate synthase, mitochondrial (FPGS) from Homo sapiens (Human).